Here is a 329-residue protein sequence, read N- to C-terminus: Cathepsin K (329 aa).

A signal peptide spans 1-15 (MWGLKVLLLPVVSFA). Residues 16–114 (LHPEEILDTQ…TLYIPDWEGR (99 aa)) constitute a propeptide, activation peptide. N-linked (GlcNAc...) asparagine glycosylation is present at Asn-103. 2 disulfide bridges follow: Cys-136/Cys-177 and Cys-170/Cys-210. Cys-139 is a catalytic residue. Asn-268 carries N-linked (GlcNAc...) asparagine glycosylation. Cys-269 and Cys-318 are oxidised to a cystine. Residues His-276 and Asn-296 contribute to the active site.

It belongs to the peptidase C1 family. In terms of tissue distribution, predominantly expressed in osteclasts (bones).

Its subcellular location is the lysosome. The protein localises to the secreted. It is found in the apical cell membrane. The catalysed reaction is Broad proteolytic activity. With small-molecule substrates and inhibitors, the major determinant of specificity is P2, which is preferably Leu, Met &gt; Phe, and not Arg.. Functionally, thiol protease involved in osteoclastic bone resorption and may participate partially in the disorder of bone remodeling. Displays potent endoprotease activity against fibrinogen at acid pH. May play an important role in extracellular matrix degradation. Involved in the release of thyroid hormone thyroxine (T4) by limited proteolysis of TG/thyroglobulin in the thyroid follicle lumen. In Oryctolagus cuniculus (Rabbit), this protein is Cathepsin K (CTSK).